Here is a 27-residue protein sequence, read N- to C-terminus: Vasotocin-neurophysin VT (27 aa).

A disulfide bond links C1 and C6. Residue G9 is modified to Glycine amide.

Belongs to the vasopressin/oxytocin family.

In terms of biological role, vasotocin is an antidiuretic hormone. The chain is Vasotocin-neurophysin VT from Sclerophrys regularis (Common African toad).